Consider the following 257-residue polypeptide: NAD-capped RNA hydrolase NudC (257 aa).

Lysine 25 and arginine 69 together coordinate substrate. Zn(2+) is bound by residues cysteine 98 and cysteine 101. Glutamate 111 is a binding site for substrate. Zn(2+) contacts are provided by cysteine 116 and cysteine 119. Tyrosine 124 lines the substrate pocket. The region spanning 125 to 248 (PQIAPCIIVA…TVARRLIEDT (124 aa)) is the Nudix hydrolase domain. Alanine 158, glutamate 174, and glutamate 178 together coordinate a divalent metal cation. A Nudix box motif is present at residues 159–180 (GFVEVGETLEQAVAREVMEESG). Residue 192–199 (QPWPFPQS) participates in substrate binding. An a divalent metal cation-binding site is contributed by glutamate 219. Residue alanine 241 coordinates substrate.

It belongs to the Nudix hydrolase family. NudC subfamily. In terms of assembly, homodimer. Mg(2+) is required as a cofactor. Requires Mn(2+) as cofactor. Zn(2+) serves as cofactor.

It carries out the reaction a 5'-end NAD(+)-phospho-ribonucleoside in mRNA + H2O = a 5'-end phospho-adenosine-phospho-ribonucleoside in mRNA + beta-nicotinamide D-ribonucleotide + 2 H(+). It catalyses the reaction NAD(+) + H2O = beta-nicotinamide D-ribonucleotide + AMP + 2 H(+). The catalysed reaction is NADH + H2O = reduced beta-nicotinamide D-ribonucleotide + AMP + 2 H(+). Its function is as follows. mRNA decapping enzyme that specifically removes the nicotinamide adenine dinucleotide (NAD) cap from a subset of mRNAs by hydrolyzing the diphosphate linkage to produce nicotinamide mononucleotide (NMN) and 5' monophosphate mRNA. The NAD-cap is present at the 5'-end of some mRNAs and stabilizes RNA against 5'-processing. Has preference for mRNAs with a 5'-end purine. Catalyzes the hydrolysis of a broad range of dinucleotide pyrophosphates. The sequence is that of NAD-capped RNA hydrolase NudC from Escherichia coli O157:H7.